A 147-amino-acid chain; its full sequence is MKVLLLLGFIFCSMAAHGKRMERCEFARRIKQLHLDGYHQISLANWVCLAQWESGFDTKATNYNPGDQSTDYGILQINSHYWCDDGKTPHAANECKVRCSELQEDDLVKAVNCAKKIVDQQGIRAWVAWRNKCEGKDLSKYLEGCHL.

The first 18 residues, 1–18, serve as a signal peptide directing secretion; that stretch reads MKVLLLLGFIFCSMAAHG. A C-type lysozyme domain is found at 19 to 147; that stretch reads KRMERCEFAR…LSKYLEGCHL (129 aa). Disulfide bonds link Cys-24/Cys-145, Cys-48/Cys-133, Cys-83/Cys-99, and Cys-95/Cys-113. Residues Glu-53 and Asp-71 contribute to the active site.

Belongs to the glycosyl hydrolase 22 family. As to quaternary structure, monomer.

It localises to the secreted. It carries out the reaction Hydrolysis of (1-&gt;4)-beta-linkages between N-acetylmuramic acid and N-acetyl-D-glucosamine residues in a peptidoglycan and between N-acetyl-D-glucosamine residues in chitodextrins.. Functionally, lysozymes have primarily a bacteriolytic function; those in tissues and body fluids are associated with the monocyte-macrophage system and enhance the activity of immunoagents. This chain is Lysozyme C (LYZ), found in Trichosurus vulpecula (Brush-tailed possum).